A 968-amino-acid polypeptide reads, in one-letter code: RNA polymerase-associated protein RapA (968 aa).

The 171-residue stretch at 164 to 334 (DVGRRHAPRV…FARLRLLDPN (171 aa)) folds into the Helicase ATP-binding domain. 177 to 184 (DEVGLGKT) provides a ligand contact to ATP. The DEAH box signature appears at 280–283 (DEAH). Residues 490 to 662 (RVEWLMGYLT…YLASPVQTEG (173 aa)) form the Helicase C-terminal domain.

Belongs to the SNF2/RAD54 helicase family. RapA subfamily. In terms of assembly, interacts with the RNAP. Has a higher affinity for the core RNAP than for the holoenzyme. Its ATPase activity is stimulated by binding to RNAP.

Its function is as follows. Transcription regulator that activates transcription by stimulating RNA polymerase (RNAP) recycling in case of stress conditions such as supercoiled DNA or high salt concentrations. Probably acts by releasing the RNAP, when it is trapped or immobilized on tightly supercoiled DNA. Does not activate transcription on linear DNA. Probably not involved in DNA repair. This chain is RNA polymerase-associated protein RapA, found in Shigella sonnei (strain Ss046).